Here is an 83-residue protein sequence, read N- to C-terminus: MAGERAQNLQDTFLNHVRKNKIPLTIFLVNGVKLQGVVTWFDNFCVLLRRDGHSQLVYKHAISTIMPGHPVQLFEPDETAEKA.

Residues 11–71 (DTFLNHVRKN…ISTIMPGHPV (61 aa)) form the Sm domain.

Belongs to the Hfq family. Homohexamer.

RNA chaperone that binds small regulatory RNA (sRNAs) and mRNAs to facilitate mRNA translational regulation in response to envelope stress, environmental stress and changes in metabolite concentrations. Also binds with high specificity to tRNAs. In Methylobacterium radiotolerans (strain ATCC 27329 / DSM 1819 / JCM 2831 / NBRC 15690 / NCIMB 10815 / 0-1), this protein is RNA-binding protein Hfq.